The sequence spans 124 residues: Fluoride-specific ion channel FluC (124 aa).

The next 4 helical transmembrane spans lie at 4-24, 35-55, 60-80, and 100-120; these read VLYIAAGGAIGAVLRYSISIL, FGTLIVNVAGSFLMGCIYALA, IGPEWKALIGVGLLGALTTFS, and LNVLLNLILCLTVVYLGQQLI. Residues Gly74 and Thr77 each coordinate Na(+).

The protein belongs to the fluoride channel Fluc/FEX (TC 1.A.43) family.

It is found in the cell inner membrane. It catalyses the reaction fluoride(in) = fluoride(out). Its activity is regulated as follows. Na(+) is not transported, but it plays an essential structural role and its presence is essential for fluoride channel function. In terms of biological role, fluoride-specific ion channel. Important for reducing fluoride concentration in the cell, thus reducing its toxicity. The sequence is that of Fluoride-specific ion channel FluC from Shewanella amazonensis (strain ATCC BAA-1098 / SB2B).